The sequence spans 348 residues: Protein disulfide isomerase CRELD2 (348 aa).

Positions M1–V22 are cleaved as a signal peptide. Residues C30 to C33 carry the CXXC motif. 4 disulfide bridges follow: C30-C33, C139-C153, C147-C165, and C167-C176. An EGF-like 1 domain is found at D135–I177. One copy of the FU 1 repeat lies at H192 to P239. A glycan (N-linked (GlcNAc...) asparagine) is linked at N250. An FU 2 repeat occupies S252–V299. A CXXC motif is present at residues C262–C265. Disulfide bonds link C262-C265, C293-C307, C300-C316, and C318-C328. The EGF-like 2; calcium-binding domain maps to D289–L329.

The protein belongs to the CRELD family. Interacts with CHRNA4. Component of a complex containing at least CRELD2, MANF, MATN3 and PDIA4.

It localises to the endoplasmic reticulum. It catalyses the reaction Catalyzes the rearrangement of -S-S- bonds in proteins.. Functionally, protein disulfide isomerase. Might play a role in the unfolded protein response. May regulate transport of alpha4-beta2 neuronal acetylcholine receptor. This chain is Protein disulfide isomerase CRELD2 (CRELD2), found in Cricetulus griseus (Chinese hamster).